The primary structure comprises 216 residues: ATP phosphoribosyltransferase (216 aa).

The protein belongs to the ATP phosphoribosyltransferase family. Short subfamily. As to quaternary structure, heteromultimer composed of HisG and HisZ subunits.

Its subcellular location is the cytoplasm. The enzyme catalyses 1-(5-phospho-beta-D-ribosyl)-ATP + diphosphate = 5-phospho-alpha-D-ribose 1-diphosphate + ATP. It participates in amino-acid biosynthesis; L-histidine biosynthesis; L-histidine from 5-phospho-alpha-D-ribose 1-diphosphate: step 1/9. Functionally, catalyzes the condensation of ATP and 5-phosphoribose 1-diphosphate to form N'-(5'-phosphoribosyl)-ATP (PR-ATP). Has a crucial role in the pathway because the rate of histidine biosynthesis seems to be controlled primarily by regulation of HisG enzymatic activity. The sequence is that of ATP phosphoribosyltransferase from Acidovorax ebreus (strain TPSY) (Diaphorobacter sp. (strain TPSY)).